Reading from the N-terminus, the 334-residue chain is GTP 3',8-cyclase (334 aa).

Residues 13 to 239 (RFHRKFYYLR…KVKAANDGPA (227 aa)) form the Radical SAM core domain. Arginine 22 lines the GTP pocket. 2 residues coordinate [4Fe-4S] cluster: cysteine 29 and cysteine 33. Position 35 (tyrosine 35) interacts with S-adenosyl-L-methionine. Position 36 (cysteine 36) interacts with [4Fe-4S] cluster. Arginine 73 is a GTP binding site. Glycine 77 is an S-adenosyl-L-methionine binding site. Threonine 104 serves as a coordination point for GTP. Serine 128 serves as a coordination point for S-adenosyl-L-methionine. Lysine 165 provides a ligand contact to GTP. Methionine 199 serves as a coordination point for S-adenosyl-L-methionine. [4Fe-4S] cluster contacts are provided by cysteine 262 and cysteine 265. Residue 267–269 (RLR) participates in GTP binding. Cysteine 279 serves as a coordination point for [4Fe-4S] cluster.

Belongs to the radical SAM superfamily. MoaA family. In terms of assembly, monomer and homodimer. The cofactor is [4Fe-4S] cluster.

The catalysed reaction is GTP + AH2 + S-adenosyl-L-methionine = (8S)-3',8-cyclo-7,8-dihydroguanosine 5'-triphosphate + 5'-deoxyadenosine + L-methionine + A + H(+). It functions in the pathway cofactor biosynthesis; molybdopterin biosynthesis. Functionally, catalyzes the cyclization of GTP to (8S)-3',8-cyclo-7,8-dihydroguanosine 5'-triphosphate. This Vibrio vulnificus (strain YJ016) protein is GTP 3',8-cyclase.